A 37-amino-acid polypeptide reads, in one-letter code: Large ribosomal subunit protein bL36 (37 aa).

It belongs to the bacterial ribosomal protein bL36 family.

The protein is Large ribosomal subunit protein bL36 of Endomicrobium trichonymphae.